We begin with the raw amino-acid sequence, 901 residues long: HTH-type transcriptional regulator MalT (901 aa).

39–46 (SPAGYGKT) is an ATP binding site. Positions 829 to 894 (ELIRTSPLTQ…AAVQHAQKLL (66 aa)) constitute an HTH luxR-type domain. The segment at residues 853 to 872 (NEQIAGELEVAATTIKTHIR) is a DNA-binding region (H-T-H motif).

This sequence belongs to the MalT family. Monomer in solution. Oligomerizes to an active state in the presence of the positive effectors ATP and maltotriose.

Its activity is regulated as follows. Activated by ATP and maltotriose, which are both required for DNA binding. Positively regulates the transcription of the maltose regulon whose gene products are responsible for uptake and catabolism of malto-oligosaccharides. Specifically binds to the promoter region of its target genes, recognizing a short DNA motif called the MalT box. This is HTH-type transcriptional regulator MalT from Escherichia coli (strain 55989 / EAEC).